The following is a 564-amino-acid chain: 5-hydroxytryptamine receptor 1 (564 aa).

Residues 1–26 (MALSGQDWRRHQSHRQHRNHRTQGNH) form a disordered region. The segment covering 11–23 (HQSHRQHRNHRTQ) has biased composition (basic residues). A helical transmembrane segment spans residues 29–51 (LISTATLTLFVLFLSSWIAYAAG). 9 tandem repeats follow at residues 89 to 90 (GS), 91 to 92 (GS), 93 to 94 (GS), 95 to 96 (GS), 97 to 98 (GS), 99 to 100 (GS), 101 to 102 (GS), 103 to 104 (GS), and 105 to 106 (GS). A 9 X 2 AA tandem repeats of G-S region spans residues 89–106 (GSGSGSGSGSGSGSGSGS). Residues 165–188 (VSIVLLIVILGTVVGNVLVCIAVC) form a helical membrane-spanning segment. Topologically, residues 189-198 (MVRKLRRPCN) are cytoplasmic. A helical transmembrane segment spans residues 199 to 222 (YLLVSLALSDLCVALLVMPMALLY). Residues 223 to 236 (EVLEKWNFGPLLCD) lie on the Extracellular side of the membrane. A disulfide bond links Cys-235 and Cys-314. A helical membrane pass occupies residues 237-258 (IWVSFDVLCCTASILNLCAISV). The tract at residues 238 to 247 (WVSFDVLCCT) is agonist binding. Asp-242 and Thr-247 together coordinate ergotamine. The DRY motif; important for ligand-induced conformation changes signature appears at 259 to 261 (DRY). At 259–278 (DRYLAITKPLEYGVKRTPRR) the chain is on the cytoplasmic side. The helical transmembrane segment at 279-302 (MMLCVGIVWLAAACISLPPLLILG) threads the bilayer. The Extracellular segment spans residues 303 to 330 (NEHEDEEGQPICTVCQNFAYQIYATLGS). Residues 331-353 (FYIPLSVMLFVYYQIFRAARRIV) traverse the membrane as a helical segment. Over 354–454 (LEEKRAQTHL…QLAKEKKAST (101 aa)) the chain is Cytoplasmic. The segment at 367–396 (LNGTGSPSAPQAPPLGHTELASSGNGQRHS) is disordered. Positions 386-396 (LASSGNGQRHS) are enriched in polar residues. Residues 455-476 (TLGIIMSAFTVCWLPFFILALI) traverse the membrane as a helical segment. The Extracellular portion of the chain corresponds to 477–487 (RPFETMHVPAS). The chain crosses the membrane as a helical span at residues 488-510 (LSSLFLWLGYANSLLNPIIYATL). The short motif at 503–507 (NPIIY) is the NPxxY motif; important for ligand-induced conformation changes and signaling element. Residues 511 to 564 (NRDFRKPFQEILYFRCSSLNTMMRENYYQDQYGEPPSQRVMLGDERHGARESFL) lie on the Cytoplasmic side of the membrane.

The protein belongs to the G-protein coupled receptor 1 family. 5-hydroxytryptamine receptor subfamily. Expressed predominantly in adult heads.

It localises to the cell membrane. Its function is as follows. G-protein coupled receptor for 5-hydroxytryptamine (serotonin). Also functions as a receptor for various alkaloids. Ligand binding causes a conformation change that triggers signaling via guanine nucleotide-binding proteins (G proteins) and modulates the activity of down-stream effectors, such as adenylate cyclase. Signaling activates adenylate cyclase activity. The protein is 5-hydroxytryptamine receptor 1 (5-HT7) of Drosophila melanogaster (Fruit fly).